The sequence spans 368 residues: Alanine racemase (368 aa).

Lys40 functions as the Proton acceptor; specific for D-alanine in the catalytic mechanism. Lys40 carries the N6-(pyridoxal phosphate)lysine modification. Arg134 lines the substrate pocket. Tyr263 serves as the catalytic Proton acceptor; specific for L-alanine. Met310 provides a ligand contact to substrate.

This sequence belongs to the alanine racemase family. Requires pyridoxal 5'-phosphate as cofactor.

It catalyses the reaction L-alanine = D-alanine. Its pathway is amino-acid biosynthesis; D-alanine biosynthesis; D-alanine from L-alanine: step 1/1. Its function is as follows. Catalyzes the interconversion of L-alanine and D-alanine. May also act on other amino acids. The polypeptide is Alanine racemase (alr) (Listeria innocua serovar 6a (strain ATCC BAA-680 / CLIP 11262)).